Consider the following 947-residue polypeptide: MRFKALLRAIFRFRKTNFSILLIITYAIIIALLVFDRSRYKLDLPNATSDKLRRNLLEQAWSDLQVITQSPHPYSSRNNDVVHDFLLQRVKNITRSNDNIYIDDDYRNKSSILFHQPDVFNSTSKVSRVVYYESSNIIVKVVGSNNELPALLISGHFDSVPTSYGATDDGKGIATMLSLLNHFSSSQPKRSVIFNFNNNEEFGLLGAYAFTYHPWIRDIEYFINLEGMGAGDRAVLFRTSNVETAEIYKKAVKSRPFGNSIFQQGFNSRYIGSQTDYKVYDEYGLKGWDISFYKPRDYYHTAKDSIQYTSKESLWSMLNQSLQLAIYISNEKLIKKSSSNPAVFFDLLGLFFVVVDTKHLFYADIFMLIVGPILLMMKAHLDKRRRLERSRLVQLRLLLSLGLSVVFLLLLTKSLNSFNPFVYSADYRTPLTGLFLLFVTVNYLIVTLAERLNPTESYKTVAINQIFIIAWLMQLYITLRMAKSDFTLTGTYPLSIFSGCLIVALSLGLFGTKNKAVNDAPNSSVRYASSQNDEDNPLPSQDRGENINQVRDTGNQEVTSNTNTDLHSNAEEVDERMPLLSNNHIGDSGKMDKNSDFSKHYNWIVQFLCIVPISSFIFLFSLDYTLDAIHKMVQETTDDVQLICIIITIGVILLALPILPFISKLNYQSSVIIAIIGVLLFGKSLVMQPFSEIAPLKVRFLQTVNQHDISKSSVSLFTAKDTPIKEMIYDLPSVKSQSTLVNCTVFGGSKICDYYGLPPNLVDSEGNRQNKNLMKIEVLKNDNNDTQRSPYAPLSAEIKINVSENRVCSLAFWSQSSKQSPVKKFSVIKSNNNNTNSVSNSIKYADGIDEVLIHKLDFNGAHHFSIEWLPNIPFDLDYDPVIDGQGDNNIEITVACFTGEADSLSVVNGHPLKKIPAFDEVVKYSPKWYTFTNRDRGLVVIKDKIQL.

At 1–15 (MRFKALLRAIFRFRK) the chain is on the cytoplasmic side. Residues 16 to 36 (TNFSILLIITYAIIIALLVFD) traverse the membrane as a helical segment. At 37-358 (RSRYKLDLPN…GLFFVVVDTK (322 aa)) the chain is on the vacuolar side. N46, N92, N108, and N121 each carry an N-linked (GlcNAc...) asparagine glycan. Zn(2+)-binding residues include H156 and D168. E200 serves as the catalytic Proton acceptor. Residues E201, E226, and H300 each contribute to the Zn(2+) site. A glycan (N-linked (GlcNAc...) asparagine) is linked at N319. The helical transmembrane segment at 359–379 (HLFYADIFMLIVGPILLMMKA) threads the bilayer. Over 380–391 (HLDKRRRLERSR) the chain is Cytoplasmic. A helical membrane pass occupies residues 392–412 (LVQLRLLLSLGLSVVFLLLLT). The Vacuolar portion of the chain corresponds to 413-428 (KSLNSFNPFVYSADYR). A helical membrane pass occupies residues 429-449 (TPLTGLFLLFVTVNYLIVTLA). Topologically, residues 450 to 458 (ERLNPTESY) are cytoplasmic. A helical membrane pass occupies residues 459–479 (KTVAINQIFIIAWLMQLYITL). Topologically, residues 480 to 489 (RMAKSDFTLT) are vacuolar. A helical membrane pass occupies residues 490-510 (GTYPLSIFSGCLIVALSLGLF). Residues 511–601 (GTKNKAVNDA…DKNSDFSKHY (91 aa)) lie on the Cytoplasmic side of the membrane. 2 stretches are compositionally biased toward polar residues: residues 522–531 (NSSVRYASSQ) and 546–567 (NINQ…TDLH). The segment at 522 to 573 (NSSVRYASSQNDEDNPLPSQDRGENINQVRDTGNQEVTSNTNTDLHSNAEEV) is disordered. The helical transmembrane segment at 602–622 (NWIVQFLCIVPISSFIFLFSL) threads the bilayer. Over 623 to 641 (DYTLDAIHKMVQETTDDVQ) the chain is Vacuolar. The chain crosses the membrane as a helical span at residues 642–662 (LICIIITIGVILLALPILPFI). The Cytoplasmic segment spans residues 663–669 (SKLNYQS). A helical membrane pass occupies residues 670-690 (SVIIAIIGVLLFGKSLVMQPF). Over 691–947 (SEIAPLKVRF…LVVIKDKIQL (257 aa)) the chain is Vacuolar. Residues N742, N784, N801, and N833 are each glycosylated (N-linked (GlcNAc...) asparagine).

It belongs to the peptidase M28 family. Zn(2+) is required as a cofactor.

The protein resides in the vacuole membrane. May be involved in vacuolar sorting and osmoregulation. In Candida glabrata (strain ATCC 2001 / BCRC 20586 / JCM 3761 / NBRC 0622 / NRRL Y-65 / CBS 138) (Yeast), this protein is Vacuolar membrane protease.